The chain runs to 728 residues: 1,4-alpha-glucan branching enzyme GlgB (728 aa).

Aspartate 405 serves as the catalytic Nucleophile. The active-site Proton donor is glutamate 458.

This sequence belongs to the glycosyl hydrolase 13 family. GlgB subfamily. As to quaternary structure, monomer.

It catalyses the reaction Transfers a segment of a (1-&gt;4)-alpha-D-glucan chain to a primary hydroxy group in a similar glucan chain.. The protein operates within glycan biosynthesis; glycogen biosynthesis. Catalyzes the formation of the alpha-1,6-glucosidic linkages in glycogen by scission of a 1,4-alpha-linked oligosaccharide from growing alpha-1,4-glucan chains and the subsequent attachment of the oligosaccharide to the alpha-1,6 position. The chain is 1,4-alpha-glucan branching enzyme GlgB from Serratia proteamaculans (strain 568).